Here is a 277-residue protein sequence, read N- to C-terminus: Large ribosomal subunit protein uL2cz/uL2cy (277 aa).

Disordered stretches follow at residues 1-31 (MAIH…NTRK) and 227-277 (NPVD…RRSK).

Belongs to the universal ribosomal protein uL2 family. In terms of assembly, part of the 50S ribosomal subunit.

Its subcellular location is the plastid. The protein localises to the chloroplast. The polypeptide is Large ribosomal subunit protein uL2cz/uL2cy (rpl2-A) (Manihot esculenta (Cassava)).